The chain runs to 394 residues: MFSESLPEDKPVLEVALTELPMVAESLPEDGSGLEVTCDLRLEHKPARTLLLVGRSGNGKSATGNSILGRKAFKSKGRASGVTTACELQSSTLPNGQIINVIDTPGLFSLSPSTEFTCREILRCFSLTKEGIDAVLLVFSLKNRLTEEEKSALFALKILFGSKIVDYMIVVFTNEDSLEDDGDTFEEYLEDSPDFKEILEPCNDRKVLFRNRSNAPVSQKAKQVQELLNYVEEIARLNGKSYMADLSHEIRENETAFQIKQQEILEMKGLYTRQEMLQMKKDMEKSFENQQLRQMMERVETELRETKERLEQQLKEEKSARLELEKRAKEVEKRSSDVVKELNDEQAKRLESESRAKEAVKQSNGVVENLNKELARIKQMATDLQKSKQWCIIM.

The AIG1-type G domain occupies 45–251 (KPARTLLLVG…YMADLSHEIR (207 aa)). The interval 54–61 (GRSGNGKS) is G1. Residues 54–62 (GRSGNGKSA) and S75 contribute to the GTP site. Positions 81 to 85 (GVTTA) are G2. The tract at residues 103–106 (DTPG) is G3. The segment at 173-176 (TNED) is G4. Positions 210 to 212 (RNR) are G5. N211 provides a ligand contact to GTP. Positions 289–387 (NQQLRQMMER…KQMATDLQKS (99 aa)) form a coiled coil.

The protein belongs to the TRAFAC class TrmE-Era-EngA-EngB-Septin-like GTPase superfamily. AIG1/Toc34/Toc159-like paraseptin GTPase family. IAN subfamily.

The polypeptide is Immune-associated nucleotide-binding protein 12 (Arabidopsis thaliana (Mouse-ear cress)).